The primary structure comprises 444 residues: Structure-specific endonuclease subunit SLX1 (444 aa).

Residues 23–105 enclose the GIY-YIG domain; it reads AFSCCYLLRS…QNTKVSRHAD (83 aa). An SLX1-type zinc finger spans residues 240 to 295; sequence CGVCKQRLILQHDIIAVCSHSSCHCAAHLSCLSSHFLKDKDSDSELVPREGTCPTC. The tract at residues 324 to 354 is disordered; it reads RRQRAGTPKGQGLKSVRGRGHSEDENESDAL.

It belongs to the SLX1 family. As to quaternary structure, forms a heterodimer with SLX4. A divalent metal cation is required as a cofactor.

It localises to the nucleus. Its function is as follows. Catalytic subunit of the SLX1-SLX4 structure-specific endonuclease that resolves DNA secondary structures generated during DNA repair and recombination. Has endonuclease activity towards branched DNA substrates, introducing single-strand cuts in duplex DNA close to junctions with ss-DNA. The sequence is that of Structure-specific endonuclease subunit SLX1 from Paracoccidioides lutzii (strain ATCC MYA-826 / Pb01) (Paracoccidioides brasiliensis).